The following is a 514-amino-acid chain: Peptide chain release factor 3 (514 aa).

The region spanning 8–268 (KKRRTFAIIS…TFLEFAPEPH (261 aa)) is the tr-type G domain. GTP is bound by residues 17 to 24 (SHPDAGKT), 85 to 89 (DTPGH), and 139 to 142 (NKLD).

Belongs to the TRAFAC class translation factor GTPase superfamily. Classic translation factor GTPase family. PrfC subfamily.

The protein localises to the cytoplasm. In terms of biological role, increases the formation of ribosomal termination complexes and stimulates activities of RF-1 and RF-2. It binds guanine nucleotides and has strong preference for UGA stop codons. It may interact directly with the ribosome. The stimulation of RF-1 and RF-2 is significantly reduced by GTP and GDP, but not by GMP. This is Peptide chain release factor 3 from Streptococcus pyogenes serotype M18 (strain MGAS8232).